We begin with the raw amino-acid sequence, 4328 residues long: MKKHRVFHLFLLIFCKAISLVTTSSSTEQIFEFTAPLYNLSVEENSIGSKYARSENSTKIGVPLPEKDANCKFRVAEIVGEKSSLFKAHSRQVGDFVFLRIRYKGDNPLNRELKDFYDILVKAMCKRRDLSNLETTARIHLRVIDRNDASPVFLVGEQGYEAEIDDDLEPFSTVLRVEASDADIGINSAIYFSLVNRSHDFIVEPVTGWVRSLRHVKPGKYSLKVKSEDRASRLYYFDENEVQPSWTADVLITVRETKPKPRRILVDQRKINPNILNNRQLAAIITLKDSPNDAIVGLKGNEKEHWFEVEPEVVGNDGTKELRWMLYAKNGSQVPKNTNVTLTIGEDYIRRSGFSISKKPVIPTNETVTIQIERLAEHLIRFLDNEKLTLKTDEMAPIGRILYRMNVNVENPDDVSLIRYSLEYSKSDLPNATLPFAIGSKNGILRVSAKINRSERVYNFKVIASLHGINEKLAEKDVSIEILDSNDHAPVFSAKWMRQTPIVIGKPGDVLVKVDATDQDEGENGKIVYKFTSELPLEINANTGEITLVEVPKKGNSWPATVWAIDLGLPLSRMSALNLMFYKNGTKIPAKPKPIIIQESENKHSPVFSSFPEIVEVTEDAPIGTVVAKLQANDEDTGYNGFIRYVIHDIAGSSHEVLTVDEQSGEITVASDLSKLMKEKLEVLDVQLKVSAIDAGTPVKSSVKTMKLRIKDVNNHSPQFDEVSYYLRISENEKPGKDIFKVTANDFDGGNNGKIKFSLGNNQEKSSVISIDAKTGIVKLLKSLDREDQDVHTFAIIASDEGFPMRVSVTNLTISVEDVNDNPPKCVVQHSRARIPEDLPHGAFVSCMAAFDEDIGQNSKLKFLLNSEKVPFRIDHHSGCIFIHAPEYPLDYHKTPFFNLSIEVADHGDPILSTSCHLHVELVDIAHNHLAIEFDDVAKEASVYENSEIGTEVIMIEAKETGDEQKVKAENLEYRIIGGDGWPHFSIDQKGTVRTTHLLDRETKSAYWITVEARDSKTDLYKDPRRRDVLHVFIRILDRNDHRPVAKKPMYIASVAENSPANVVIVKVEATDADDVDNDAAAPLMFKIERGDPQSFFRIDLTSGYITTSGIRRLDREKQSEHELWVSICDGGEPQLCSNVIVIVNVLDENDNSPTFTQAIHHYSVRSKFAGKLCRIFAVDADEGENARLTYNITEGDARFSIDNNGNIIASEAIHGDESYALTVQATDHGTPGQQFAATRVVLTANSAGQKPRKSKNSPPEISGKKSDYVIPISDADQVGLTVGKLEASDADGDELWWSISSGDPDSVFDVRQDTGQLLLAKKVELLKRGELRLNISVTDGQAWDHSTVIIQVSRQISQRPKFSASHYQTDVSERVAVGTQIYTLKASGESLGTKPLVFNLFSVDDVAMEDKIRVEPSSGNVIVMEPLDYEAARRIRAVVQVQQANMKSFATFSVNINDENDNSPYFVGHTAFAFVDESDTVDDVLATVTAFDKDRGENGIVTYSIVSGNEESLFKIDAKSGEVRLAKPLDPELQHVESILRIRAIDSAANSLKDEMSLHIRNSNEAPETAKFDRKVYQTTLYDSTRPGTPVLVLNALHHGTVSYKLEPNCTFFEVHTLSGAVHLATWLTKLKHRKSVECTAIVESTEGQQDIAKVIAKIIRTNQHSPIFRRQVYRGTIRENMPTGSSVLSKSLLPLVVSAIDEDPGSNGLVGYRMLSPKDEQMFSVDQYSGAIRTQMSFDFEKMKEYSFYVQAFDMGQPPRRSLMPSLIVVTVIDENDEPPRFPSNSLDISMILPTANGVSVGGQTAQDMDSVGSLRYFIKDQSVPFSVDSKTGDVLVKDSNGISDMTKLFDLEVFVTDGKQSASYVMKISTISTENSKFKFTRNEYHTSLIENTTLPPGSIILSVATIGDKLDHFSIVNPHEAFFIHPGTGVISSSGIALDREKSAIIRLVVQAKSHEKNPVMARALVVVGIENINDETPIFMGTPYDITIGHSDIGTVVLEPKVIDNDEGDVVTISSENMPEYFKIVGGKVVLGKKLPSIEEEDLEFNFKLIAKDNGSVHRVEEPVKIRVVDKARPVFSQNVYTAVISKESTKKSTVLVKVMAKSSLQSKSKGLIGYRILDKKSPFSVDFLTGEVRLNNLKMLAETNYTFEVEAREVTRPKMIAKAQVEIIVKSGITTHAPVFEKLKYTASTPESTSIGQRLLTIKATTSDENDTIEYSLSGSKDIEIHPETGDVTITGQLDYEKTQKYDLKLVATSSGKQVSSEAEFIVLIEDVNDEMPEFIRSDVSAKISDSAITGQFITIMSATDMDTTNSLDEESQKLLYKIVDGDETLFNISPATGELSLARPVEQDDLVNEDTKKVLNVSVTDGMFTAYAKLVVEILRSGSMQPPPRFEQSHYVANALENTIVNKSALLTVAVKGGVPPLQFSLAPTTSSNSSTSKEAWPVAIDRKTGRIHVSRVLNYHRDKRYQIPLVVEDATGRRAFSTLTLSVIDINDKPPFFVLPFYSTSISESAKEGDTVMMVSATDDDENDTIEYSLLDGSESQFFSVHPRQGTITVAKKLEHKAGVTLSLTIKATDSANPPHHATTTVEVNIASESVKVPRFSNSHYLFSVMEDADVGNVIGRVQQMETEIDEIRFTIVPGSEESDSFLPFSVERSTGKIIVKSSLDRERKNQWKMTIRADAAGGVHAITTVTVDIGDVNDNAPAFHGDYERFTISEDAAVGTSVTIFSAMDRDDSPSGRIRFSLVEENPYFDLNENSGWLTVASQLDREKIDHYKLIARATDEGGFNTDLPFTIVVSDVNDSPPQFEKEEFNIDLHLPSTSPILHFSIKDDDLSPNNVSQFFIPKGNEEGVFWIDSNNDLLLKRPEIVENKMQYQLKVTAFDGVFETSTKVKINLKSSKDSDIRCPEANKTVILAENSKKGTVVLGESSLLGPNVTFKLSDNDGNVFVVNFRNGIVKVKESDQIDYEKNQQLEFHRLTIQDNSEVCKELITVVIENLNDNRPKIIEKLLKVSIDENLPTSEDARQYITRIVAEDADFDEIKFRMVDDFGGLFQIDDINGVVTVVKPLDSEILGFFNLTVVASDGEFEDKATILVTVIDQNDNAPTFEKSTYSMKVMESESIGYELAHFRASGGDQNETIEYYLKPSDVTSFVNLNAQTGILTLAKPLDFETLSALKLTVVAKDSGVPPLETEAQVEISVMDENDNAPKFEKEKYVGKVKENSKSGEKVLTVKALDVDSEHFGAVSYELEIVSETTTDTPVLPFAINSNGDVLISQSIDYEKIKKYNLKVIAKDGGRPPLRSEALLEIHVEDENDHAPTFDDCNMTALVQEGEAIGHRLLKFSVSDLDGPKNGAPFTVEIQGDGAKSFKVNEKLELLTAKKLEYRKKDKYLLTVIAKDVKGKTTDCPLTIFIRQTSRHAPTMKPMKIQINTLQNELPEGIIGRLKASDEDEEDQNGLLRFGLVEGSIQSPRAQVQESRSTHLFRVDPNTGDIWSDHSITQGLHTFNVTVTDSKFNTVSYVEVHVTSIDNDVIDHAVSIRIRSMSVDEFMRKHVKEFRRIISHHLNLNDDSSIQLISVQAVPSTESERRSRRNSMEDVEILMTAQRGLGRGYLKPDHIYSRLKNDFQNMNDQSQRMRYQLITEMCTTGVCLRGECREVIELIEDSWTKVSTDDFSFVSPFHSRSAQCLCPDGFGGKRCEVETNQCAKSPCEQWQLCIPSVHNSTYECVCPLGMEGDKCSVPSCQNDGKCLEEAELSVGGDGYFEISLSNEIETRMELEIELKTTTHNGIIMWSRGKRDFHMLRLVNGTPEYHWNAGTGTGIVTSKTSVVDGQWHRIAISRRQRRTRMTVDDEDLQEAFSPIGSTVINLHRYSQKLVLGAKVDDGELTDGVSACFRTISVDGMKVLKTRQGMKLFGAQPGCSALTSSPCNDLPCQHAGTCISQGKSHFKCECPSRYSGNVCEIDLEPCASSPCPTGIQCIPFYNDYLCKCPNGFTGKHCEARGFEDHETSSCSKNVCGTSGQCISIPRHSLESSDFICNCTGGILQSTPCAEKSDILSTVLEFLLKAEIVIVILGVLLLLLVFCLTFITWKCCKKNRDPKYGAHCDVPHMRNTRVLVPVVPPPLPPRGFRNDSSNFISTSSVTTSHRPMVQVKPYSSDIRDSRSPSACGSSKGTRRDPLPSDKFRRVDETANRIRHSDRKDPRGDVLSSLRDSSDEWMGIDDRIDSSLKYSRAAAGTVIVGDTELMPVINDNDYMTMKPRKDKNFEREKPPAIPAHATPLESVLKLGSSSSGEEAPRNALYDDPISLDSQTFDDIDEEVNIHIS.

Residues 1–23 form the signal peptide; the sequence is MKKHRVFHLFLLIFCKAISLVTT. Residues 24-4072 are Extracellular-facing; sequence SSSTEQIFEF…TVLEFLLKAE (4049 aa). Residues Asn39 and Asn56 are each glycosylated (N-linked (GlcNAc...) asparagine). 2 Cadherin domains span residues 108 to 153 and 156 to 275; these read PLNR…SPVF and GEQG…NPNI. N-linked (GlcNAc...) asparagine glycans are attached at residues Asn196, Asn330, Asn339, Asn365, Asn431, Asn452, and Asn584. Cadherin domains are found at residues 384–492, 507–608, 609–720, 721–826, 827–934, 935–1051, 1047–1156, 1175–1262, 1265–1363, 1364–1467, and 1476–1570; these read DNEK…APVF, PGDV…SPVF, SSFP…SPQF, DEVS…PPKC, VVQH…AIEF, DDVA…KPMY, KKPM…SPTF, RIFA…PPEI, KKSD…RPKF, SASH…SPYF, and VDES…APET. 2 N-linked (GlcNAc...) asparagine glycosylation sites follow: Asn811 and Asn899. The short motif at 1090–1092 is the Cell attachment site element; sequence RGD. Residue Asn1192 is glycosylated (N-linked (GlcNAc...) asparagine). Residues 1246–1267 form a disordered region; it reads NSAGQKPRKSKNSPPEISGKKS. N-linked (GlcNAc...) asparagine glycosylation occurs at Asn1335. Asn1610 is a glycosylation site (N-linked (GlcNAc...) asparagine). In terms of domain architecture, Cadherin 14 spans 1671–1784; the sequence is RRQVYRGTIR…IDENDEPPRF (114 aa). An N-linked (GlcNAc...) asparagine glycan is attached at Asn1895. The Cadherin 15 domain maps to 1917-1984; the sequence is FSIVNPHEAF…ENINDETPIF (68 aa). Residues Asn2059, Asn2150, Asn2216, Asn2367, Asn2413, Asn2440, and Asn2535 are each glycosylated (N-linked (GlcNAc...) asparagine). 2 Cadherin domains span residues 2187–2285 and 2286–2397; these read EKLK…MPEF and IRSD…PPRF. Cadherin domains lie at 2429–2505, 2506–2608, 2609–2712, 2719–2813, 2828–2915, 2913–3011, 3012–3113, 3114–3216, and 3217–3326; these read LQFS…PPFF, VLPF…VPRF, SNSH…APAF, FTIS…PPQF, SPIL…CPEA, PEAN…RPKI, IEKL…APTF, EKST…APKF, and EKEK…APTF. N-linked (GlcNAc...) asparagine glycans are attached at residues Asn2844, Asn2916, Asn2941, Asn3083, and Asn3143. Asn3330 is a glycosylation site (N-linked (GlcNAc...) asparagine). Cadherin domains are found at residues 3335–3428 and 3429–3554; these read VQEG…APTM and KPMK…VDEF. N-linked (GlcNAc...) asparagine glycosylation occurs at Asn3512. The EGF-like 1 domain occupies 3706-3744; that stretch reads ETNQCAKSPCEQWQLCIPSVHNSTYECVCPLGMEGDKCS. 10 cysteine pairs are disulfide-bonded: Cys3710–Cys3721, Cys3715–Cys3732, Cys3734–Cys3743, Cys3898–Cys3925, Cys3933–Cys3944, Cys3938–Cys3954, Cys3956–Cys3965, Cys3972–Cys3983, Cys3977–Cys3992, and Cys3994–Cys4003. N-linked (GlcNAc...) asparagine glycosylation is present at Asn3727. Positions 3757 to 3925 constitute a Laminin G-like domain; the sequence is EAELSVGGDG…MKLFGAQPGC (169 aa). EGF-like domains lie at 3929-3966 and 3968-4004; these read TSSP…NVCE and DLEP…KHCE. An N-linked (GlcNAc...) asparagine glycan is attached at Asn4043. Residues 4073–4093 traverse the membrane as a helical segment; the sequence is IVIVILGVLLLLLVFCLTFIT. The Cytoplasmic portion of the chain corresponds to 4094–4328; it reads WKCCKKNRDP…IDEEVNIHIS (235 aa). Disordered regions lie at residues 4143–4215 and 4268–4311; these read TSSV…SSLR and NFER…PISL. The span at 4178 to 4196 shows a compositional bias: basic and acidic residues; it reads TRRDPLPSDKFRRVDETAN. The Cell attachment site motif lies at 4207–4209; it reads RGD.

In larvae and adult, it is expressed in various tissues including pharyngeal muscle, hypodermis and gonad. In the nervous system it is expressed in sensory neurons and motor neurons in the ventral cord.

Its subcellular location is the cell membrane. Its function is as follows. Potential calcium-dependent cell-adhesion protein that controls axon guidance in the ventral cord. This is Cadherin-4 from Caenorhabditis elegans.